We begin with the raw amino-acid sequence, 441 residues long: tRNA modification GTPase MnmE (441 aa).

The (6S)-5-formyl-5,6,7,8-tetrahydrofolate site is built by R21, E78, and K117. Residues G211 to K363 form the TrmE-type G domain. Residue N221 participates in K(+) binding. Residues N221–T226, T240–T246, and D265–G268 each bind GTP. Mg(2+) is bound at residue S225. Residues T240, I242, and T245 each coordinate K(+). T246 contacts Mg(2+). K441 is a binding site for (6S)-5-formyl-5,6,7,8-tetrahydrofolate.

Belongs to the TRAFAC class TrmE-Era-EngA-EngB-Septin-like GTPase superfamily. TrmE GTPase family. In terms of assembly, homodimer. Heterotetramer of two MnmE and two MnmG subunits. The cofactor is K(+).

The protein resides in the cytoplasm. Exhibits a very high intrinsic GTPase hydrolysis rate. Involved in the addition of a carboxymethylaminomethyl (cmnm) group at the wobble position (U34) of certain tRNAs, forming tRNA-cmnm(5)s(2)U34. The sequence is that of tRNA modification GTPase MnmE from Thermosipho melanesiensis (strain DSM 12029 / CIP 104789 / BI429).